The sequence spans 72 residues: uncharacterized protein (72 aa).

This is an uncharacterized protein from Escherichia coli (strain K12).